A 517-amino-acid polypeptide reads, in one-letter code: Zinc finger protein 215 (517 aa).

The region spanning 48-126 (RQKFRHFQYL…KDMVTLIEDV (79 aa)) is the SCAN box domain. In terms of domain architecture, KRAB spans 164–237 (VTFKDVVVEF…EKEIPRKTIF (74 aa)). 4 consecutive C2H2-type zinc fingers follow at residues 379 to 401 (YECY…QIIH), 407 to 429 (YKCS…QKLH), 462 to 484 (YQCV…QMIH), and 490 to 512 (FKCK…QKLH).

Belongs to the krueppel C2H2-type zinc-finger protein family.

Its subcellular location is the nucleus. In terms of biological role, may be involved in transcriptional regulation. This is Zinc finger protein 215 (ZNF215) from Homo sapiens (Human).